We begin with the raw amino-acid sequence, 372 residues long: Mitogen-activated protein kinase homolog NTF3 (372 aa).

The region spanning 32-319 (YVPIKPIGRG…VIEALQHPYM (288 aa)) is the Protein kinase domain. ATP-binding positions include 38–46 (IGRGAYGIV) and Lys-61. The active-site Proton acceptor is the Asp-158. Thr-191 carries the post-translational modification Phosphothreonine. The TXY signature appears at 191-193 (TEY). Tyr-193 is modified (phosphotyrosine).

Belongs to the protein kinase superfamily. CMGC Ser/Thr protein kinase family. MAP kinase subfamily. Requires Mg(2+) as cofactor. Post-translationally, dually phosphorylated on Thr-191 and Tyr-193, which activates the enzyme. Very low autophosphorylation, although dramatically increased when Mn(2+) is added to the reaction instead of Mg(2+). Ubiquitous.

It catalyses the reaction L-seryl-[protein] + ATP = O-phospho-L-seryl-[protein] + ADP + H(+). The enzyme catalyses L-threonyl-[protein] + ATP = O-phospho-L-threonyl-[protein] + ADP + H(+). Its activity is regulated as follows. Activated by tyrosine and threonine phosphorylation. This chain is Mitogen-activated protein kinase homolog NTF3 (NTF3), found in Nicotiana tabacum (Common tobacco).